The sequence spans 143 residues: Transcription antitermination protein NusB (143 aa).

Belongs to the NusB family.

Involved in transcription antitermination. Required for transcription of ribosomal RNA (rRNA) genes. Binds specifically to the boxA antiterminator sequence of the ribosomal RNA (rrn) operons. The polypeptide is Transcription antitermination protein NusB (Buchnera aphidicola subsp. Acyrthosiphon pisum (strain 5A)).